Reading from the N-terminus, the 305-residue chain is D-alanine--D-alanine ligase (305 aa).

The region spanning 107 to 299 (KKMLCYHGIA…FDELVERILA (193 aa)) is the ATP-grasp domain. An ATP-binding site is contributed by 134–186 (PDYPLVVKPAREGSTIGISIVHDEQELAAGLEEAFRHDDLVLVEQFIAGAEVT). Asp-254, Glu-266, and Asn-268 together coordinate Mg(2+).

This sequence belongs to the D-alanine--D-alanine ligase family. Mg(2+) serves as cofactor. It depends on Mn(2+) as a cofactor.

It localises to the cytoplasm. It carries out the reaction 2 D-alanine + ATP = D-alanyl-D-alanine + ADP + phosphate + H(+). It functions in the pathway cell wall biogenesis; peptidoglycan biosynthesis. Its function is as follows. Cell wall formation. The polypeptide is D-alanine--D-alanine ligase (Syntrophotalea carbinolica (strain DSM 2380 / NBRC 103641 / GraBd1) (Pelobacter carbinolicus)).